The primary structure comprises 146 residues: MPSQGKKYEYLEHTADIKFLAYGETVEEVFENAALAMFNVIIDTEKVSGETEREVLLTSPDLESLLVDWLSELLYLFEVDEVVFWKFQVEEIREEEGEYSIKALASGEKYYPESHPFETEIKAVTYNQLELEKTAGGWKAQVVVDI.

Residues aspartate 16, aspartate 145, and isoleucine 146 each coordinate Ca(2+).

Belongs to the archease family.

Its function is as follows. Activates the tRNA-splicing ligase complex by facilitating the enzymatic turnover of catalytic subunit RtcB. Acts by promoting the guanylylation of RtcB, a key intermediate step in tRNA ligation. Can also alter the NTP specificity of RtcB such that ATP, dGTP or ITP is used efficiently. This Methanosarcina mazei (strain ATCC BAA-159 / DSM 3647 / Goe1 / Go1 / JCM 11833 / OCM 88) (Methanosarcina frisia) protein is Protein archease.